A 1260-amino-acid polypeptide reads, in one-letter code: Agglutinin-like protein 1 (1260 aa).

Residues 1–17 (MLQQFTLLFLYLSIASA) form the signal peptide. Disulfide bonds link C73/C150, C96/C112, C205/C298, and C227/C256. 10 repeat units span residues 433–468 (SPNP…IIRE), 469–504 (PPNH…IIRE), 505–540 (PPNP…IIRE), 541–576 (PPNP…IIRE), 577–612 (PPNH…IIRE), 613–648 (PPNH…IIRE), 649–684 (PPNP…LIRE), 685–720 (PPNH…LIRE), 721–756 (PPNH…IIRE), and 757–792 (PPNP…IIYE). The interval 433-792 (SPNPTVSTTE…GGTDTVIIYE (360 aa)) is 10 X 36 AA tandem repeats. N-linked (GlcNAc...) asparagine glycosylation is present at N471. N-linked (GlcNAc...) asparagine glycans are attached at residues N579 and N615. N-linked (GlcNAc...) asparagine glycosylation is found at N687 and N723. 4 N-linked (GlcNAc...) asparagine glycosylation sites follow: N820, N886, N918, and N973. Composition is skewed to polar residues over residues 896 to 918 (PTAS…SSDN) and 964 to 979 (KVTF…GTHD). Disordered regions lie at residues 896–924 (PTAS…KSGV) and 954–1226 (SIPS…SSSP). Residues 980–995 (SQSTSTEIEIVTTSST) are compositionally biased toward low complexity. A 2-1 repeat occupies 983-1043 (TSTEIEIVTT…TTSQPTGDNG (61 aa)). Residues 983–1152 (TSTEIEIVTT…ATTQATNENG (170 aa)) form a 2 X 26 AA approximate repeats region. The segment covering 1002–1062 (VSSNTDLTSE…PTVATSTLAS (61 aa)) has biased composition (polar residues). Residues N1045 and N1068 are each glycosylated (N-linked (GlcNAc...) asparagine). Polar residues predominate over residues 1073–1090 (HESASTSLKPSMGENSGL). The span at 1091–1110 (TTSTEIEATTTSPTEAPSPA) shows a compositional bias: low complexity. One copy of the 2-2 repeat lies at 1092-1152 (TSTEIEATTT…ATTQATNENG (61 aa)). Positions 1111 to 1154 (VSSGTDVTTEPTDTREQPTTLSTTSKTNSESVATTQATNENGGK) are enriched in polar residues. Composition is skewed to low complexity over residues 1155–1176 (SPST…SANS) and 1197–1226 (SHST…SSSP).

The protein belongs to the ALS family. N-glycosylated and O-glycosylated. In terms of processing, the GPI-anchor is attached to the protein in the endoplasmic reticulum and serves to target the protein to the cell surface. There, the glucosamine-inositol phospholipid moiety is cleaved off and the GPI-modified mannoprotein is covalently attached via its lipidless GPI glycan remnant to the 1,6-beta-glucan of the outer cell wall layer.

The protein resides in the cell membrane. It is found in the secreted. It localises to the cell wall. Its function is as follows. Major cell surface adhesion protein which mediates both yeast-to-host tissue adherence and yeast aggregation. Acts as a downstream effector of the EFG1 regulatory pathway. Required for rapamycin-induced aggregation of C.albicans. Binds glycans and mediates adherence to endothelial and epithelial cells, thereby playing an important role in the pathogenesis of C.albicans infections. The chain is Agglutinin-like protein 1 (ALS1) from Candida albicans (Yeast).